The chain runs to 197 residues: Holliday junction branch migration complex subunit RuvA (197 aa).

The domain I stretch occupies residues Met-1–Arg-63. The interval Ser-64 to Val-142 is domain II. Residues Ala-143 to Ser-147 are flexible linker. The segment at Ala-148–Lys-197 is domain III.

Belongs to the RuvA family. In terms of assembly, homotetramer. Forms an RuvA(8)-RuvB(12)-Holliday junction (HJ) complex. HJ DNA is sandwiched between 2 RuvA tetramers; dsDNA enters through RuvA and exits via RuvB. An RuvB hexamer assembles on each DNA strand where it exits the tetramer. Each RuvB hexamer is contacted by two RuvA subunits (via domain III) on 2 adjacent RuvB subunits; this complex drives branch migration. In the full resolvosome a probable DNA-RuvA(4)-RuvB(12)-RuvC(2) complex forms which resolves the HJ.

The protein resides in the cytoplasm. In terms of biological role, the RuvA-RuvB-RuvC complex processes Holliday junction (HJ) DNA during genetic recombination and DNA repair, while the RuvA-RuvB complex plays an important role in the rescue of blocked DNA replication forks via replication fork reversal (RFR). RuvA specifically binds to HJ cruciform DNA, conferring on it an open structure. The RuvB hexamer acts as an ATP-dependent pump, pulling dsDNA into and through the RuvAB complex. HJ branch migration allows RuvC to scan DNA until it finds its consensus sequence, where it cleaves and resolves the cruciform DNA. This Streptococcus pneumoniae (strain Hungary19A-6) protein is Holliday junction branch migration complex subunit RuvA.